The sequence spans 207 residues: Peptidyl-prolyl cis-trans isomerase FKBP16-1, chloroplastic (207 aa).

Residues 104-207 (GDLVELNYVC…VFEIQLLKVL (104 aa)) enclose the PPIase FKBP-type domain.

It belongs to the FKBP-type PPIase family.

The protein localises to the plastid. Its subcellular location is the chloroplast thylakoid lumen. It carries out the reaction [protein]-peptidylproline (omega=180) = [protein]-peptidylproline (omega=0). In terms of biological role, PPIases accelerate the folding of proteins. It catalyzes the cis-trans isomerization of proline imidic peptide bonds in oligopeptides. The chain is Peptidyl-prolyl cis-trans isomerase FKBP16-1, chloroplastic (FKBP16-1) from Arabidopsis thaliana (Mouse-ear cress).